Consider the following 595-residue polypeptide: Putative laccase-18 (595 aa).

A signal peptide spans 1-29; that stretch reads MEKLSTAASLFGVVVAATALAMAVVGGEA. Plastocyanin-like domains are found at residues 37–153 and 162–316; these read MVHE…PRDG and KDVP…YTGA. Residues N42 and N48 are each glycosylated (N-linked (GlcNAc...) asparagine). Residues H87 and H89 each contribute to the Cu cation site. The N-linked (GlcNAc...) asparagine glycan is linked to N121. 2 residues coordinate Cu cation: H132 and H134. N-linked (GlcNAc...) asparagine glycans are attached at residues N206, N345, N382, N402, N409, N439, and N470. Positions 429–571 constitute a Plastocyanin-like 3 domain; it reads DFPVRPPRPF…ATAFIVEDGP (143 aa). 8 residues coordinate Cu cation: N488, H491, H493, H550, C551, H552, H556, and M561. The disordered stretch occupies residues 570–595; that stretch reads GPTPETSLPPPPPEFKRCGTNGLSQP.

The protein belongs to the multicopper oxidase family. It depends on Cu cation as a cofactor.

The protein resides in the secreted. It is found in the extracellular space. The protein localises to the apoplast. The enzyme catalyses 4 hydroquinone + O2 = 4 benzosemiquinone + 2 H2O. Its function is as follows. Lignin degradation and detoxification of lignin-derived products. This Oryza sativa subsp. indica (Rice) protein is Putative laccase-18 (LAC18).